We begin with the raw amino-acid sequence, 238 residues long: Sarcospan (238 aa).

Positions 1 to 33 are disordered; the sequence is MGKDRQPRGQQRQGDAAGPDDPGPKKGAGTREQ. Topologically, residues 1–48 are extracellular; sequence MGKDRQPRGQQRQGDAAGPDDPGPKKGAGTREQRGEEEAQTCCGCRFP. Low complexity predominate over residues 8–20; the sequence is RGQQRQGDAAGPD. The chain crosses the membrane as a helical span at residues 49–69; that stretch reads LLLALLQLALGVAVTVVGFLM. At 70–81 the chain is on the cytoplasmic side; it reads ASVSSSLLVRAT. Residues 82–102 form a helical membrane-spanning segment; it reads PYWAGIIVCVVAYLGLFMLCV. Over 103-117 the chain is Cytoplasmic; the sequence is SYQVDERTCIQFSMK. A helical transmembrane segment spans residues 118–138; sequence LLYFVLSALGLVVCVLAVAFA. Over 139–188 the chain is Extracellular; it reads AHHYSLLTHLTCENAPDSCQCKLPSSEPLSRTFVYRDVTDCTSITGTFQV. The helical transmembrane segment at 189–209 threads the bilayer; sequence FLLVQMVLNLVCGLVCLVACF. The Cytoplasmic portion of the chain corresponds to 210–238; the sequence is VMWKHRYQVFYVGVRMCPLSASEGQQQKV.

The protein resides in the cell membrane. It localises to the sarcolemma. Its subcellular location is the postsynaptic cell membrane. Component of the dystrophin-glycoprotein complex (DGC), a complex that spans the muscle plasma membrane and forms a link between the F-actin cytoskeleton and the extracellular matrix. Preferentially associates with the sarcoglycan subcomplex of the DGC. The sequence is that of Sarcospan (SSPN) from Oryctolagus cuniculus (Rabbit).